Reading from the N-terminus, the 2182-residue chain is Autophagy-related protein 2 (2182 aa).

6 disordered regions span residues 291-375, 392-426, 523-630, 663-682, 736-758, and 793-816; these read SPSL…PLAD, EQDYPLGDSEDALGIPYEFSNPQDDDAEDSPATPR, YTHE…STTL, DIDPENPRASTKQQEDVATP, GAFSVHGATHAQQRSSQGTSSVE, and DKKPSPAEGSKQDTASKDAPSKET. Composition is skewed to polar residues over residues 303-313 and 322-331; these read NPPSRQATELS and VSSSQASIRS. Residues 332–347 show a composition bias toward basic and acidic residues; sequence NEPESASHHSLPENDH. 2 stretches are compositionally biased toward acidic residues: residues 528–540 and 613–624; these read AENEPAPEVEQTT and WDDDYDDPEEEP. Residues 745–758 show a composition bias toward polar residues; the sequence is HAQQRSSQGTSSVE. Basic and acidic residues predominate over residues 793-813; it reads DKKPSPAEGSKQDTASKDAPS.

Belongs to the ATG2 family. In terms of assembly, interacts with ATG18.

It is found in the preautophagosomal structure membrane. The protein resides in the endoplasmic reticulum membrane. It carries out the reaction a 1,2-diacyl-sn-glycero-3-phosphocholine(in) = a 1,2-diacyl-sn-glycero-3-phosphocholine(out). The enzyme catalyses a 1,2-diacyl-sn-glycero-3-phospho-L-serine(in) = a 1,2-diacyl-sn-glycero-3-phospho-L-serine(out). It catalyses the reaction a 1,2-diacyl-sn-glycero-3-phosphoethanolamine(in) = a 1,2-diacyl-sn-glycero-3-phosphoethanolamine(out). Functionally, lipid transfer protein required for autophagosome completion and peroxisome degradation and peroxisome degradation. Tethers the edge of the isolation membrane (IM) to the endoplasmic reticulum (ER) and mediates direct lipid transfer from ER to IM for IM expansion. ATG2 binds to the ER exit site (ERES), which is the membrane source for autophagosome formation, using basic residues in its N-terminal region (NR) and to the expanding edge of the IM through its C-terminal region. The latter binding is assisted by an ATG18-PtdIns3P interaction. ATG2 then extracts phospholipids from the membrane source using its NR and transfers them to ATG9 to the IM through its predicted beta-sheet-rich structure for membrane expansion. Autophagy is required for proper vegetative growth, asexual/sexual reproduction, and full virulence. Autophagy is particularly involved in the biosynthesis of deoxynivalenol (DON), an important virulence determinant. This Gibberella zeae (strain ATCC MYA-4620 / CBS 123657 / FGSC 9075 / NRRL 31084 / PH-1) (Wheat head blight fungus) protein is Autophagy-related protein 2.